A 527-amino-acid polypeptide reads, in one-letter code: Probable bifunctional tRNA threonylcarbamoyladenosine biosynthesis protein (527 aa).

The kae1 stretch occupies residues 1 to 324 (MIVLGLEGTA…YRIDEVDAPW (324 aa)). The Fe cation site is built by His107, His111, and Tyr128. Residues 128-132 (YVSGG), Asp160, Gly173, Glu177, and Asn257 each bind L-threonylcarbamoyladenylate. Asp285 is a Fe cation binding site. The Protein kinase domain occupies 330–527 (VKYRDAGAES…EDIRRRHRYV (198 aa)). Residues 333 to 341 (RDAGAESRI) and Lys354 contribute to the ATP site. Asp445 (proton acceptor; for kinase activity) is an active-site residue.

In the N-terminal section; belongs to the KAE1 / TsaD family. The protein in the C-terminal section; belongs to the protein kinase superfamily. Tyr protein kinase family. BUD32 subfamily. Component of the KEOPS complex that consists of Kae1, Bud32, Cgi121 and Pcc1; the whole complex dimerizes. It depends on Fe(2+) as a cofactor.

It is found in the cytoplasm. The enzyme catalyses L-seryl-[protein] + ATP = O-phospho-L-seryl-[protein] + ADP + H(+). It catalyses the reaction L-threonyl-[protein] + ATP = O-phospho-L-threonyl-[protein] + ADP + H(+). It carries out the reaction L-threonylcarbamoyladenylate + adenosine(37) in tRNA = N(6)-L-threonylcarbamoyladenosine(37) in tRNA + AMP + H(+). Required for the formation of a threonylcarbamoyl group on adenosine at position 37 (t(6)A37) in tRNAs that read codons beginning with adenine. Is a component of the KEOPS complex that is probably involved in the transfer of the threonylcarbamoyl moiety of threonylcarbamoyl-AMP (TC-AMP) to the N6 group of A37. The Kae1 domain likely plays a direct catalytic role in this reaction. The Bud32 domain probably displays kinase activity that regulates Kae1 function. The protein is Probable bifunctional tRNA threonylcarbamoyladenosine biosynthesis protein of Thermoplasma volcanium (strain ATCC 51530 / DSM 4299 / JCM 9571 / NBRC 15438 / GSS1).